Consider the following 203-residue polypeptide: MSAELELLWPVSGLLLLLLGATAWLCVHCSRPGVKRNEKIYEQRNRQENAQSSAAAQTYSLARQVWPGPQMDTAPNKSFERKNKMLFSHLEGPESPRYQNFYKGSNQEPDAAYVDPIPTNYYNWGCFQKPSEDDDSNSYENVLVCKPSTPESGVEDFEDYQNSVSIHQWRESKRTMGAPMSLSGSPDEEPDYVNGDVAAAENI.

The Extracellular portion of the chain corresponds to 1–6; that stretch reads MSAELE. A helical; Signal-anchor for type III membrane protein transmembrane segment spans residues 7-27; sequence LLWPVSGLLLLLLGATAWLCV. Residues C26 and C29 are each lipidated (S-palmitoyl cysteine). The Cytoplasmic segment spans residues 28–203; the sequence is HCSRPGVKRN…NGDVAAAENI (176 aa). Phosphotyrosine is present on Y59. Residues S60 and S95 each carry the phosphoserine modification. 3 positions are modified to phosphotyrosine: Y139, Y160, and Y192. Residues 171 to 203 are disordered; it reads ESKRTMGAPMSLSGSPDEEPDYVNGDVAAAENI.

As to quaternary structure, when phosphorylated, interacts with GRB2. May also interact with SOS1, GAB1 and CBL. Post-translationally, phosphorylated on tyrosines following cross-linking of BCR in B-cells, high affinity IgG receptor (FCGR1) in myeloid cells, or high affinity IgE receptor (FCER1) in mast cells; which induces the recruitment of GRB2. As to expression, strongly expressed in testis. Expressed in heart, spleen and lung. Present in B-cells and mast cells (at protein level).

Its subcellular location is the cell membrane. Its function is as follows. Involved in FCER1 (high affinity immunoglobulin epsilon receptor)-mediated signaling in mast cells. May also be involved in BCR (B-cell antigen receptor)-mediated signaling in B-cells and FCGR1 (high affinity immunoglobulin gamma Fc receptor I)-mediated signaling in myeloid cells. Couples activation of these receptors and their associated kinases with distal intracellular events through the recruitment of GRB2. This chain is Linker for activation of T-cells family member 2 (Lat2), found in Mus musculus (Mouse).